Here is a 112-residue protein sequence, read N- to C-terminus: DNA-directed RNA polymerase subunit Rpo11 (112 aa).

Belongs to the archaeal Rpo11/eukaryotic RPB11/RPC19 RNA polymerase subunit family. In terms of assembly, part of the RNA polymerase complex.

It is found in the cytoplasm. It carries out the reaction RNA(n) + a ribonucleoside 5'-triphosphate = RNA(n+1) + diphosphate. Its function is as follows. DNA-dependent RNA polymerase (RNAP) catalyzes the transcription of DNA into RNA using the four ribonucleoside triphosphates as substrates. This chain is DNA-directed RNA polymerase subunit Rpo11, found in Methanopyrus kandleri (strain AV19 / DSM 6324 / JCM 9639 / NBRC 100938).